The following is a 201-amino-acid chain: Small ribosomal subunit protein uS4c (201 aa).

Residues 17–44 (ALPGLTNKKPRTGSDLRNQSRSGKKSQY) are disordered. The 61-residue stretch at 89 to 149 (MRLDNILFRL…DEQKSRALIQ (61 aa)) folds into the S4 RNA-binding domain.

It belongs to the universal ribosomal protein uS4 family. As to quaternary structure, part of the 30S ribosomal subunit. Contacts protein S5. The interaction surface between S4 and S5 is involved in control of translational fidelity.

It is found in the plastid. Its subcellular location is the chloroplast. In terms of biological role, one of the primary rRNA binding proteins, it binds directly to 16S rRNA where it nucleates assembly of the body of the 30S subunit. Functionally, with S5 and S12 plays an important role in translational accuracy. The chain is Small ribosomal subunit protein uS4c (rps4) from Atropa belladonna (Belladonna).